Reading from the N-terminus, the 242-residue chain is N-alpha-acetyltransferase 60 (242 aa).

Residues 1 to 192 lie on the Cytoplasmic side of the membrane; sequence MTEVVPSSAL…GGHPPWTILD (192 aa). Residues 13 to 182 enclose the N-acetyltransferase domain; that stretch reads VSLRLLCHDD…DGFTYVLYIN (170 aa). Position 38 (tyrosine 38) interacts with substrate. N6-acetyllysine; by autocatalysis is present on lysine 79. Tyrosine 97 is a catalytic residue. Leucine 99 contributes to the substrate binding site. 101–103 lines the acetyl-CoA pocket; that stretch reads LGV. N6-acetyllysine; by autocatalysis is present on residues lysine 105, lysine 109, and lysine 121. 109 to 114 contacts acetyl-CoA; that stretch reads KHGIGS. Residue histidine 138 is part of the active site. Residues asparagine 143 and 150 to 153 each bind acetyl-CoA; that span reads YENR. An N6-acetyllysine; by autocatalysis modification is found at lysine 156. Residues 162–173 form a required for homodimerization region; sequence PYYYSIRGVLKD. Tyrosine 165 is a substrate binding site. Residues 193-236 constitute an intramembrane region (helical); the sequence is YIQHLGSALASLSPCSIPHRVYRQAHSLLCSFLPWSGISSKSGI. The Cytoplasmic portion of the chain corresponds to 237-242; the sequence is EYSRTM.

Belongs to the acetyltransferase family. NAA60 subfamily. In terms of assembly, monomer and homodimer; monomer in presence of substrate and homodimer in its absence. Post-translationally, acetylated: autoacetylation is required for optimal acetyltransferase activity.

The protein resides in the golgi apparatus membrane. The enzyme catalyses N-terminal L-methionyl-[transmembrane protein] + acetyl-CoA = N-terminal N(alpha)-acetyl-L-methionyl-[transmembrane protein] + CoA + H(+). It catalyses the reaction L-lysyl-[protein] + acetyl-CoA = N(6)-acetyl-L-lysyl-[protein] + CoA + H(+). N-alpha-acetyltransferase that specifically mediates the acetylation of N-terminal residues of the transmembrane proteins, with a strong preference for N-termini facing the cytosol. Displays N-terminal acetyltransferase activity towards a range of N-terminal sequences including those starting with Met-Lys, Met-Val, Met-Ala and Met-Met. Required for normal chromosomal segregation during anaphase. May also show histone acetyltransferase activity; such results are however unclear in vivo and would require additional experimental evidences. The polypeptide is N-alpha-acetyltransferase 60 (Homo sapiens (Human)).